Reading from the N-terminus, the 335-residue chain is Serpentine receptor class XA 10 (335 aa).

Residues 1-10 lie on the Extracellular side of the membrane; sequence MDVDAAVVKR. Residues 11 to 31 traverse the membrane as a helical segment; it reads IALWVYETCSVFNLFYCITLS. Over 32 to 46 the chain is Cytoplasmic; sequence LAIKTSKNNALPATY. The chain crosses the membrane as a helical span at residues 47–67; the sequence is IYNMAISNALLVIFGIMVYIL. Topologically, residues 68–82 are extracellular; it reads PYYMSDKTYKTYRDS. A helical membrane pass occupies residues 83-103; sequence IGAMISVGVTFNYLHPMLTLI. At 104–126 the chain is on the cytoplasmic side; sequence LMTINRIAVVVSMQASQLFTSSK. Residues 127-147 traverse the membrane as a helical segment; it reads IWLYTSFHMTANFACLIIPYL. Residues 148–177 are Extracellular-facing; that stretch reads SECRINYDIRKVGFISECAPDRHQITTFSN. The chain crosses the membrane as a helical span at residues 178 to 198; sequence YYSVFFPFVAFFFNVLVIINF. Residues 199-238 are Cytoplasmic-facing; the sequence is KLQRSPTYTKIKNMFRRGNGDQFTSMPSDVLKAKKKTERM. A helical transmembrane segment spans residues 239-259; sequence LMIQAFITAFYLSVYELTSLV. Residues 260 to 276 are Extracellular-facing; the sequence is LRVVPELFGNLSLDGKL. A helical transmembrane segment spans residues 277–297; sequence AFTYFRLAQVPCHVFLVYFIF. At 298–319 the chain is on the cytoplasmic side; that stretch reads TPVTRKIYMDFVRERVFCMKPA.

This sequence belongs to the nematode receptor-like protein srxa family.

It localises to the membrane. The protein is Serpentine receptor class XA 10 (srxa-10) of Caenorhabditis elegans.